A 1013-amino-acid chain; its full sequence is Receptor-type tyrosine-protein phosphatase N2 (1013 aa).

The first 19 residues, 1 to 19, serve as a signal peptide directing secretion; it reads MALPLLLLLLLLLPPRVLP. The segment at 1–419 is involved in localization to secretory granules; interaction with CPE; it reads MALPLLLLLL…PGALPFAKPL (419 aa). At 20–613 the chain is on the extracellular side; it reads AAPSSVPHGR…QAEQEDSTKF (594 aa). 4 disordered regions span residues 116–137, 273–302, 342–382, and 401–487; these read RHPE…ERRY, MPRP…TGEG, DHRG…VQDD, and LQDH…SLPA. Basic and acidic residues predominate over residues 419 to 430; the sequence is LKMERKKSERPE. 2 positions are modified to phosphoserine: Ser434 and Ser435. Asn562 carries an N-linked (GlcNAc...) asparagine glycan. A helical membrane pass occupies residues 614–634; sequence IALTLVSLACILGVLLASGLI. Residues 635-1013 are Cytoplasmic-facing; it reads YCLRHSSQHR…VNAILKALPQ (379 aa). The short motif at 664 to 673 is the Tyrosine-based internalization motif element; it reads YQELCRQRMA. A disordered region spans residues 673-717; it reads ATRPPDRPEGPHTSRISSVSSQFSDGPMPSPSARSSASSWSEEPV. Residues 686–696 are compositionally biased toward polar residues; that stretch reads SRISSVSSQFS. Phosphoserine occurs at positions 690 and 696. Residues 703–717 show a composition bias toward low complexity; sequence PSARSSASSWSEEPV. Residues 743-1003 form the Tyrosine-protein phosphatase domain; it reads LEKEWEALCA…EFALTAVAEE (261 aa). Residues Asp911 and 943 to 949 contribute to the substrate site; that span reads CSDGAGR. The active-site Phosphocysteine intermediate is Cys943. Position 968 is an N6-acetyllysine (Lys968). Gln988 is a substrate binding site. Positions 1002–1008 match the Leucine-based sorting signal motif; that stretch reads EEVNAIL.

The protein belongs to the protein-tyrosine phosphatase family. Receptor class 8 subfamily. Self-associates. Interacts (via cytoplasmic domain) with PTPRN (via cytoplasmic domain). Interacts (precursor form) with CPE. Interacts with HAP1. Interacts with AP2A1 or AP2A2 and AP1G1; indicative for an association with adaptor protein complex 2 (AP-2) and adaptor protein complex 1 (AP-1). Interacts with AP2M1; indicative for an association with adaptor protein complex 2 (AP-2). Interacts with MYO5A. In terms of processing, subject to proteolytic cleavage at multiple sites. Detected in pancreatic islets and adrenal medulla.

It localises to the cytoplasmic vesicle. It is found in the secretory vesicle membrane. The protein resides in the secretory vesicle. The protein localises to the synaptic vesicle membrane. It carries out the reaction O-phospho-L-tyrosyl-[protein] + H2O = L-tyrosyl-[protein] + phosphate. Functionally, plays a role in vesicle-mediated secretory processes. Required for normal accumulation of secretory vesicles in hippocampus, pituitary and pancreatic islets. Required for the accumulation of normal levels of insulin-containing vesicles and preventing their degradation. Plays a role in insulin secretion in response to glucose stimuli. Required for normal accumulation of the neurotransmitters norepinephrine, dopamine and serotonin in the brain. In females, but not in males, required for normal accumulation and secretion of pituitary hormones, such as luteinizing hormone (LH) and follicle-stimulating hormone (FSH). Required to maintain normal levels of renin expression and renin release. May regulate catalytic active protein-tyrosine phosphatases such as PTPRA through dimerization. Has phosphatidylinositol phosphatase activity; the PIPase activity is involved in its ability to regulate insulin secretion. Can dephosphorylate phosphatidylinositol 4,5-biphosphate, phosphatidylinositol 5-phosphate and phosphatidylinositol 3-phosphate. Regulates PI(4,5)P2 level in the plasma membrane and localization of cofilin at the plasma membrane and thus is indirectly involved in regulation of actin dynamics related to cell migration and metastasis; upon hydrolysis of PI(4,5)P2 cofilin is released from the plasma membrane and acts in the cytoplasm in severing F-actin filaments. This Macaca nemestrina (Pig-tailed macaque) protein is Receptor-type tyrosine-protein phosphatase N2 (PTPRN2).